Consider the following 149-residue polypeptide: Alpha-crystallin A chain (149 aa).

A sHSP domain is found at 41–149 (LFRTVLESGI…DTSYSERPIP (109 aa)). Positions 89, 91, and 96 each coordinate Zn(2+).

This sequence belongs to the small heat shock protein (HSP20) family. As to quaternary structure, heteropolymer composed of three CRYAA and one CRYAB subunits. Inter-subunit bridging via zinc ions enhances stability, which is crucial as there is no protein turn over in the lens. Zinc coordination is achieved at least by His-89, Glu-91 and His-96. His-83 and Glu-85 come from the same molecule within the oligomer, while His-90 residue is provided by another molecule. Can also form homodimers and homotetramers (dimers of dimers) which serve as the building blocks of homooligomers.

The protein localises to the cytoplasm. It is found in the nucleus. Its function is as follows. Contributes to the transparency and refractive index of the lens. May act as a chaperone, preventing aggregation of various proteins under a wide range of stress conditions. The polypeptide is Alpha-crystallin A chain (CRYAA) (Trachemys scripta elegans (Red-eared slider turtle)).